The sequence spans 496 residues: Nitric oxide synthase, inducible (496 aa).

The FMN site is built by cysteine 6, glutamate 32, and glutamine 36. Residues 101-341 form the FAD-binding FR-type domain; sequence KNLFTMRLRS…VRSVSGFQLP (241 aa). NADP(+) is bound at residue arginine 121. Residues histidine 143, arginine 277, tyrosine 279, serine 280, threonine 295, and alanine 297 each contribute to the FAD site. Threonine 300 serves as a coordination point for NADP(+). Tyrosine 301, valine 314, cysteine 315, and serine 316 together coordinate FAD. Threonine 355, arginine 388, serine 417, arginine 418, lysine 424, tyrosine 426, glutamine 428, and aspartate 461 together coordinate NADP(+).

It belongs to the NOS family. Homodimer. Interacts with NHERF1. Interacts with GAPDH; induced by oxidatively-modified low-densitity lipoprotein (LDL(ox)). Interacts with S100A8 and S100A9 to form the iNOS-S100A8/9 transnitrosylase complex. Interacts with SPSB1, SPSB2 and SPSB4. Interacts with ELOC and CUL5 in the presence of SPSB1 or SPSB2 or SPSB4. Forms a complex with ASL, ASS1 and HSP90AA1; the complex regulates cell-autonomous L-arginine synthesis and citrulline recycling while channeling extracellular L-arginine to nitric oxide synthesis pathway. Requires heme b as cofactor. FAD is required as a cofactor. It depends on FMN as a cofactor. (6R)-L-erythro-5,6,7,8-tetrahydrobiopterin serves as cofactor. In terms of processing, polyubiquitinated; mediated by SPSB1, SPSB2 and SPSB4, leading to proteasomal degradation.

It localises to the cytoplasm. Its subcellular location is the cytosol. It carries out the reaction 2 L-arginine + 3 NADPH + 4 O2 + H(+) = 2 L-citrulline + 2 nitric oxide + 3 NADP(+) + 4 H2O. Its activity is regulated as follows. Not stimulated by calcium/calmodulin. Its function is as follows. Produces nitric oxide (NO) which is a messenger molecule with diverse functions throughout the body. In macrophages, NO mediates tumoricidal and bactericidal actions. Also has nitrosylase activity and mediates cysteine S-nitrosylation of cytoplasmic target proteins such PTGS2/COX2. As component of the iNOS-S100A8/9 transnitrosylase complex involved in the selective inflammatory stimulus-dependent S-nitrosylation of GAPDH implicated in regulation of the GAIT complex activity and probably multiple targets including ANXA5, EZR, MSN and VIM. Involved in inflammation, enhances the synthesis of pro-inflammatory mediators such as IL6 and IL8. The sequence is that of Nitric oxide synthase, inducible (NOS2) from Oryctolagus cuniculus (Rabbit).